Reading from the N-terminus, the 136-residue chain is Congerin-2 (136 aa).

S2 is subject to N-acetylserine. The Galectin domain maps to 4-136 (RAEVRNIPFK…DARLTFVRLE (133 aa)). 70–76 (WQQEERS) serves as a coordination point for a beta-D-galactoside.

As to quaternary structure, homodimer.

This protein binds beta-galactoside. Its physiological function is not yet known. This chain is Congerin-2, found in Conger myriaster (Conger eel).